Here is a 252-residue protein sequence, read N- to C-terminus: Pantothenate synthetase (252 aa).

29 to 36 provides a ligand contact to ATP; it reads MGNLHAGH. His36 (proton donor) is an active-site residue. Gln60 contacts (R)-pantoate. A beta-alanine-binding site is contributed by Gln60. 146-149 contributes to the ATP binding site; it reads GEKD. (R)-pantoate is bound at residue Gln152. ATP is bound by residues Val175 and 183-186; that span reads CSSR.

It belongs to the pantothenate synthetase family. As to quaternary structure, homodimer.

The protein resides in the cytoplasm. It carries out the reaction (R)-pantoate + beta-alanine + ATP = (R)-pantothenate + AMP + diphosphate + H(+). It participates in cofactor biosynthesis; (R)-pantothenate biosynthesis; (R)-pantothenate from (R)-pantoate and beta-alanine: step 1/1. In terms of biological role, catalyzes the condensation of pantoate with beta-alanine in an ATP-dependent reaction via a pantoyl-adenylate intermediate. The chain is Pantothenate synthetase from Legionella pneumophila subsp. pneumophila (strain Philadelphia 1 / ATCC 33152 / DSM 7513).